Reading from the N-terminus, the 150-residue chain is Ribonuclease pancreatic delta-type (150 aa).

Residues methionine 1 to glycine 25 form the signal peptide. Arginine 35 provides a ligand contact to substrate. The Proton acceptor role is filled by histidine 37. 4 disulfides stabilise this stretch: cysteine 51–cysteine 110, cysteine 65–cysteine 121, cysteine 83–cysteine 136, and cysteine 90–cysteine 98. Substrate is bound by residues lysine 66–threonine 70 and lysine 91. The active-site Proton donor is histidine 145.

Belongs to the pancreatic ribonuclease family. Monomer.

The protein resides in the secreted. It catalyses the reaction an [RNA] containing cytidine + H2O = an [RNA]-3'-cytidine-3'-phosphate + a 5'-hydroxy-ribonucleotide-3'-[RNA].. The catalysed reaction is an [RNA] containing uridine + H2O = an [RNA]-3'-uridine-3'-phosphate + a 5'-hydroxy-ribonucleotide-3'-[RNA].. Functionally, endonuclease that catalyzes the cleavage of RNA on the 3' side of pyrimidine nucleotides. Acts on single-stranded and double-stranded RNA. The chain is Ribonuclease pancreatic delta-type from Rattus tiomanicus (Malayan field rat).